We begin with the raw amino-acid sequence, 278 residues long: MSEGFDILKPTEADIQKLLMAKVHLGASNCTTAMSKYVYKRRSDGVNVIDLNKTYEKIVLAARIIAAVDSPANVCAISGRNFGQRAILKFCNHIGGAFPIAGRFTPGAFTNQIQKAFQEPRLLVLTDPLVDHQAVREASYVNIPIISLCDVDAPLRYVDVVIPCNNKSPHAIGIVWWMLAREVLRLRGTLPRDAEWDVMPDLYFFRDPEEIKKEEEAAAAAKEAEDDTGYTTQWDDAALDADWSATGTGNFAAAPADGNWGATTGGDWAAAGGEEWTN.

2 disordered regions span residues 216-235 and 250-278; these read EAAAAAKEAEDDTGYTTQWD and NFAAAPADGNWGATTGGDWAAAGGEEWTN. Residues 256–278 show a composition bias toward low complexity; the sequence is ADGNWGATTGGDWAAAGGEEWTN.

This sequence belongs to the universal ribosomal protein uS2 family. As to quaternary structure, component of the small ribosomal subunit. Mature ribosomes consist of a small (40S) and a large (60S) subunit. The 40S subunit contains about 33 different proteins and 1 molecule of RNA (18S). The 60S subunit contains about 49 different proteins and 3 molecules of RNA (25S, 5.8S and 5S). Interacts with ribosomal protein S21.

The protein resides in the cytoplasm. Functionally, required for the assembly and/or stability of the 40S ribosomal subunit. Required for the processing of the 20S rRNA-precursor to mature 18S rRNA in a late step of the maturation of 40S ribosomal subunits. The polypeptide is Small ribosomal subunit protein uS2 (Monosiga brevicollis (Choanoflagellate)).